The chain runs to 189 residues: dCTP deaminase (189 aa).

Residues Lys112–Arg117, Thr136–Glu138, Gln157, Tyr171, and Gln181 each bind dCTP. Catalysis depends on Glu138, which acts as the Proton donor/acceptor.

This sequence belongs to the dCTP deaminase family. As to quaternary structure, homotrimer.

The enzyme catalyses dCTP + H2O + H(+) = dUTP + NH4(+). The protein operates within pyrimidine metabolism; dUMP biosynthesis; dUMP from dCTP (dUTP route): step 1/2. Catalyzes the deamination of dCTP to dUTP. The polypeptide is dCTP deaminase (Teredinibacter turnerae (strain ATCC 39867 / T7901)).